The following is a 265-amino-acid chain: 1-(5-phosphoribosyl)-5-[(5-phosphoribosylamino)methylideneamino] imidazole-4-carboxamide isomerase (265 aa).

Asp-8 functions as the Proton acceptor in the catalytic mechanism. Asp-139 functions as the Proton donor in the catalytic mechanism.

This sequence belongs to the HisA/HisF family.

It is found in the cytoplasm. It carries out the reaction 1-(5-phospho-beta-D-ribosyl)-5-[(5-phospho-beta-D-ribosylamino)methylideneamino]imidazole-4-carboxamide = 5-[(5-phospho-1-deoxy-D-ribulos-1-ylimino)methylamino]-1-(5-phospho-beta-D-ribosyl)imidazole-4-carboxamide. Its pathway is amino-acid biosynthesis; L-histidine biosynthesis; L-histidine from 5-phospho-alpha-D-ribose 1-diphosphate: step 4/9. The sequence is that of 1-(5-phosphoribosyl)-5-[(5-phosphoribosylamino)methylideneamino] imidazole-4-carboxamide isomerase from Herminiimonas arsenicoxydans.